Here is a 498-residue protein sequence, read N- to C-terminus: L-amino acid oxidase Cdc18 (498 aa).

A signal peptide spans 1 to 2 (SC). The cysteines at positions 12 and 173 are disulfide-linked. Residues 45–46 (MA), 65–66 (EA), Arg73, and 87–90 (GPMR) contribute to the FAD site. 2 residues coordinate substrate: Arg90 and His223. Val263 is an FAD binding site. Cys333 and Cys414 are disulfide-bonded. Residue Asn363 is glycosylated (N-linked (GlcNAc...) asparagine). Tyr374 provides a ligand contact to substrate. Residues Glu459 and 466–471 (GWIDST) each bind FAD. Position 466-467 (466-467 (GW)) interacts with substrate.

Belongs to the flavin monoamine oxidase family. FIG1 subfamily. As to quaternary structure, monomer. This is in contrast with most of its orthologs, that are non-covalently linked homodimers. The cofactor is FAD. Expressed by the venom gland.

It is found in the secreted. It catalyses the reaction an L-alpha-amino acid + O2 + H2O = a 2-oxocarboxylate + H2O2 + NH4(+). It carries out the reaction L-leucine + O2 + H2O = 4-methyl-2-oxopentanoate + H2O2 + NH4(+). In terms of biological role, catalyzes an oxidative deamination of predominantly hydrophobic and aromatic L-amino acids, thus producing hydrogen peroxide that may contribute to the diverse toxic effects of this enzyme. Shows activity on L-Leu. Damages cell membranes of the Gram-positive bacteria S.aureus (MIC=8 ug/ml and MBC=16 ug/ml) and the Gram-negative bacteria A.baumannii (MIC=16 ug/ml and MBC=32 ug/ml). This antimicrobial activity is dependent on the production of hydrogen peroxyde, since it is inhibited by catalase, a hydrogen peroxyde scavenger. In Crotalus durissus cumanensis (South American rattlesnake), this protein is L-amino acid oxidase Cdc18.